Consider the following 497-residue polypeptide: Putative aldehyde dehydrogenase AldA (497 aa).

213 to 219 (GKGSESG) is a binding site for NAD(+). Catalysis depends on residues glutamate 257 and cysteine 291.

It belongs to the aldehyde dehydrogenase family.

It carries out the reaction an aldehyde + NAD(+) + H2O = a carboxylate + NADH + 2 H(+). In Staphylococcus epidermidis (strain ATCC 35984 / DSM 28319 / BCRC 17069 / CCUG 31568 / BM 3577 / RP62A), this protein is Putative aldehyde dehydrogenase AldA (aldA).